Consider the following 644-residue polypeptide: Exoribonuclease 2 (644 aa).

The region spanning 189-516 (RKDLTALDFV…NHRLLKAVIK (328 aa)) is the RNB domain. The 83-residue stretch at 561 to 643 (DTRFAAEIVD…ETRSIIARPV (83 aa)) folds into the S1 motif domain.

Belongs to the RNR ribonuclease family. RNase II subfamily.

The protein resides in the cytoplasm. It carries out the reaction Exonucleolytic cleavage in the 3'- to 5'-direction to yield nucleoside 5'-phosphates.. In terms of biological role, involved in mRNA degradation. Hydrolyzes single-stranded polyribonucleotides processively in the 3' to 5' direction. This Escherichia coli O157:H7 protein is Exoribonuclease 2.